Here is a 422-residue protein sequence, read N- to C-terminus: F-box/FBD/LRR-repeat protein At5g56420 (422 aa).

Residues 5–54 enclose the F-box domain; the sequence is RDRLSQLPDDFLLQILSWLPTKDVLVTSLLSKRWRFLWTLVPRLNYDLRL. LRR repeat units lie at residues 59–85, 136–163, 164–189, 193–212, 214–238, 279–304, and 305–330; these read CPRFSQFVDRSLLLHKAPTLESLNIKI, VLKLENITLEDASCYVCFQSLKTLHLLD, VKYLDDQSLPRIISSCSSLEDLVVQR, DNVKVVTVTAPSLKTLSLHK, SQAFEGDDDGFLIDTPKLKRVDIED, LCLITSDAAYPAGTIFSQLVHLELCT, and CAPRWWDLLTRLIEDSPKLRVLKLRQ. Residues 342-391 enclose the FBD domain; that stretch reads SWKQPALPKCLLFHLETFKWELYEGSQKQKEVATFILKHAIRLKTAIISP.

This chain is F-box/FBD/LRR-repeat protein At5g56420, found in Arabidopsis thaliana (Mouse-ear cress).